Here is a 212-residue protein sequence, read N- to C-terminus: Thiamine-phosphate synthase (212 aa).

Residues 40–44 and asparagine 75 each bind 4-amino-2-methyl-5-(diphosphooxymethyl)pyrimidine; that span reads QFREK. Mg(2+) is bound by residues aspartate 76 and aspartate 95. Residue serine 113 coordinates 4-amino-2-methyl-5-(diphosphooxymethyl)pyrimidine. 139–141 contributes to the 2-[(2R,5Z)-2-carboxy-4-methylthiazol-5(2H)-ylidene]ethyl phosphate binding site; it reads TPS. A 4-amino-2-methyl-5-(diphosphooxymethyl)pyrimidine-binding site is contributed by lysine 142. 2-[(2R,5Z)-2-carboxy-4-methylthiazol-5(2H)-ylidene]ethyl phosphate is bound by residues glycine 171 and 191 to 192; that span reads IS.

The protein belongs to the thiamine-phosphate synthase family. The cofactor is Mg(2+).

It catalyses the reaction 2-[(2R,5Z)-2-carboxy-4-methylthiazol-5(2H)-ylidene]ethyl phosphate + 4-amino-2-methyl-5-(diphosphooxymethyl)pyrimidine + 2 H(+) = thiamine phosphate + CO2 + diphosphate. It carries out the reaction 2-(2-carboxy-4-methylthiazol-5-yl)ethyl phosphate + 4-amino-2-methyl-5-(diphosphooxymethyl)pyrimidine + 2 H(+) = thiamine phosphate + CO2 + diphosphate. The enzyme catalyses 4-methyl-5-(2-phosphooxyethyl)-thiazole + 4-amino-2-methyl-5-(diphosphooxymethyl)pyrimidine + H(+) = thiamine phosphate + diphosphate. It participates in cofactor biosynthesis; thiamine diphosphate biosynthesis; thiamine phosphate from 4-amino-2-methyl-5-diphosphomethylpyrimidine and 4-methyl-5-(2-phosphoethyl)-thiazole: step 1/1. Condenses 4-methyl-5-(beta-hydroxyethyl)thiazole monophosphate (THZ-P) and 2-methyl-4-amino-5-hydroxymethyl pyrimidine pyrophosphate (HMP-PP) to form thiamine monophosphate (TMP). The protein is Thiamine-phosphate synthase of Staphylococcus carnosus (strain TM300).